The sequence spans 226 residues: MKIKICGLTREEDVVLADSLGADLLGFIHARRSPRHLELGDVAELSSLIPDEKAVLVTETSETSRIMEAIDKTGIERIQLHSVSPETAGKIHESLHAEGYSLELTLAVPPLSSHICGHEFQGISGLILDSASGGRTGGTGKIIPPSDALELLALIRGMDPSLRVTLAGGLTLEFVRKNREYVSKFDCLDFNSGIETGPGVKDHEMMAELMNYIEGLPTRKGAIEEI.

Belongs to the TrpF family.

It carries out the reaction N-(5-phospho-beta-D-ribosyl)anthranilate = 1-(2-carboxyphenylamino)-1-deoxy-D-ribulose 5-phosphate. Its pathway is amino-acid biosynthesis; L-tryptophan biosynthesis; L-tryptophan from chorismate: step 3/5. The polypeptide is N-(5'-phosphoribosyl)anthranilate isomerase (trpF) (Methanothermobacter marburgensis (strain ATCC BAA-927 / DSM 2133 / JCM 14651 / NBRC 100331 / OCM 82 / Marburg) (Methanobacterium thermoautotrophicum)).